A 333-amino-acid chain; its full sequence is G-protein coupled receptor 146 (333 aa).

The Extracellular segment spans residues 1-22 (MWSCGPLNSTAWAEEPLCRNLR). N-linked (GlcNAc...) asparagine glycosylation is present at asparagine 8. Residues 23–43 (LGLWVLSLLYLGAGVPVSLGY) form a helical membrane-spanning segment. Topologically, residues 44–64 (NALLVLANLASKNTMTMPDVY) are cytoplasmic. Residues 65 to 85 (FVNMAVAGLVLTALAPAYLLG) form a helical membrane-spanning segment. At 86-101 (PAHSRWALWSLSSEAH) the chain is on the extracellular side. The helical transmembrane segment at 102-122 (VTLLILFNVASLVTMYSTALL) threads the bilayer. At 123 to 145 (SLDYYIERALPRTYMASVYNTRH) the chain is on the cytoplasmic side. A helical membrane pass occupies residues 146–166 (VCGFVWGGAVLTSFSSLLFYI). At 167 to 188 (CSHVSSRIAECARMQNTEAADA) the chain is on the extracellular side. A helical membrane pass occupies residues 189 to 209 (ILVLIGYVVPGLAVLYALALI). Topologically, residues 210–232 (SRIGKEDTPLDQDTSRLDPSVHR) are cytoplasmic. Residues 233–253 (LLVATVCTQFGLWTPYYLSLG) form a helical membrane-spanning segment. Over 254 to 277 (HTVLTSRGRTVEGHYLGILQVAKD) the chain is Extracellular. A helical membrane pass occupies residues 278-298 (LAKFLAFSSSSVTPLLYRYIN). Residues 299 to 333 (KAFPGKLRRLMKKMHCGRRHCSPDPSGIQQVMAQA) are Cytoplasmic-facing.

The protein belongs to the G-protein coupled receptor 1 family.

The protein resides in the cell membrane. Functionally, GPCR receptor required for the regulation of plasma cholesterol levels. Receptor for CHLSN, a gut derived hormone which mediates an inhibitory effect of intestinal cholesterol absorption on hepatic cholesterol synthesis. Cholesin-binding exerts an antagonistic effect by inhibiting PKA signaling and suppressing SREBF2-controlled cholesterol in the liver. In Mus musculus (Mouse), this protein is G-protein coupled receptor 146 (Gpr146).